Reading from the N-terminus, the 127-residue chain is Fluoride-specific ion channel FluC (127 aa).

The next 4 helical transmembrane spans lie at 4 to 24 (LLLA…LLSM), 35 to 55 (LGTL…FAWF), 71 to 91 (TGFC…VFLL), and 103 to 123 (VFVN…LFSA). Positions 75 and 78 each coordinate Na(+).

The protein belongs to the fluoride channel Fluc/FEX (TC 1.A.43) family.

The protein localises to the cell inner membrane. The catalysed reaction is fluoride(in) = fluoride(out). Na(+) is not transported, but it plays an essential structural role and its presence is essential for fluoride channel function. In terms of biological role, fluoride-specific ion channel. Important for reducing fluoride concentration in the cell, thus reducing its toxicity. The protein is Fluoride-specific ion channel FluC of Escherichia coli (strain K12 / MC4100 / BW2952).